The primary structure comprises 550 residues: CTP synthase (550 aa).

Positions 1 to 271 (MTRYIFITGG…DAEVLDVFGM (271 aa)) are amidoligase domain. Residue S13 coordinates CTP. S13 contributes to the UTP binding site. 14-19 (SLGKGL) contributes to the ATP binding site. Y54 lines the L-glutamine pocket. D71 serves as a coordination point for ATP. Residues D71 and E145 each coordinate Mg(2+). CTP is bound by residues 152 to 154 (DIE), 192 to 197 (KTKPTQ), and K228. Residues 192–197 (KTKPTQ) and K228 each bind UTP. Residues 297–549 (TIAVVGKYTV…IAAAKEQGRL (253 aa)) form the Glutamine amidotransferase type-1 domain. G361 provides a ligand contact to L-glutamine. The active-site Nucleophile; for glutamine hydrolysis is the C388. L-glutamine contacts are provided by residues 389–392 (FGMQ), E412, and R477. Residues H522 and E524 contribute to the active site.

The protein belongs to the CTP synthase family. In terms of assembly, homotetramer.

The enzyme catalyses UTP + L-glutamine + ATP + H2O = CTP + L-glutamate + ADP + phosphate + 2 H(+). It catalyses the reaction L-glutamine + H2O = L-glutamate + NH4(+). It carries out the reaction UTP + NH4(+) + ATP = CTP + ADP + phosphate + 2 H(+). Its pathway is pyrimidine metabolism; CTP biosynthesis via de novo pathway; CTP from UDP: step 2/2. Its activity is regulated as follows. Allosterically activated by GTP, when glutamine is the substrate; GTP has no effect on the reaction when ammonia is the substrate. The allosteric effector GTP functions by stabilizing the protein conformation that binds the tetrahedral intermediate(s) formed during glutamine hydrolysis. Inhibited by the product CTP, via allosteric rather than competitive inhibition. Catalyzes the ATP-dependent amination of UTP to CTP with either L-glutamine or ammonia as the source of nitrogen. Regulates intracellular CTP levels through interactions with the four ribonucleotide triphosphates. This is CTP synthase from Caulobacter sp. (strain K31).